Here is a 347-residue protein sequence, read N- to C-terminus: Transcription factor JunB (347 aa).

Glycyl lysine isopeptide (Lys-Gly) (interchain with G-Cter in SUMO2) cross-links involve residues Lys-4, Lys-33, and Lys-36. A disordered region spans residues 50 to 77 (LKAPGARGPGPEGNGGGSYFSSQGSDTG). Positions 56-67 (RGPGPEGNGGGS) are enriched in gly residues. Over residues 68–77 (YFSSQGSDTG) the composition is skewed to polar residues. Residue Lys-81 forms a Glycyl lysine isopeptide (Lys-Gly) (interchain with G-Cter in SUMO2) linkage. Thr-102 and Thr-104 each carry phosphothreonine. The residue at position 117 (Ser-117) is a Phosphoserine. Residue Lys-141 forms a Glycyl lysine isopeptide (Lys-Gly) (interchain with G-Cter in SUMO2) linkage. Residue Lys-240 is modified to N6-acetyllysine; alternate. Residue Lys-240 forms a Glycyl lysine isopeptide (Lys-Gly) (interchain with G-Cter in SUMO1); alternate linkage. A Glycyl lysine isopeptide (Lys-Gly) (interchain with G-Cter in SUMO2); alternate cross-link involves residue Lys-240. Residues 241–253 (EEPQTVPEARSRD) show a composition bias toward basic and acidic residues. A disordered region spans residues 241–260 (EEPQTVPEARSRDATPPVSP). Residue Ser-251 is modified to Phosphoserine. The residue at position 255 (Thr-255) is a Phosphothreonine. Ser-259 carries the phosphoserine modification. The interval 268 to 295 (RIKVERKRLRNRLAATKCRKRKLERIAR) is basic motif. The 64-residue stretch at 268–331 (RIKVERKRLR…AQLKQKVMTH (64 aa)) folds into the bZIP domain. Residues 296–324 (LEDKVKTLKAENAGLSSTAGLLREQVAQL) form a leucine-zipper region. A Glycyl lysine isopeptide (Lys-Gly) (interchain with G-Cter in SUMO2) cross-link involves residue Lys-343.

The protein belongs to the bZIP family. Jun subfamily. In terms of assembly, binds DNA as a homodimer or as a heterodimer with another member of the Jun/Fos family. Component of an AP-1 transcription factor complex composed of JUN-FOS heterodimers. As part of the AP-1 transcription factor complex, forms heterodimers with FOSB, thereby binding to the AP-1 consensus sequence and stimulating transcription. Interacts with ITCH (via its WW domains). In terms of processing, ubiquitinated by ITCH, leading to its degradation.

The protein resides in the nucleus. Its function is as follows. Transcription factor involved in regulating gene activity following the primary growth factor response. Binds to the DNA sequence 5'-TGA[GC]TCA-3'. Heterodimerizes with proteins of the FOS family to form an AP-1 transcription complex, thereby enhancing its DNA binding activity to an AP-1 consensus sequence and its transcriptional activity. The protein is Transcription factor JunB (JUNB) of Bos taurus (Bovine).